The primary structure comprises 427 residues: N-acylglucosamine 2-epimerase (427 aa).

Residues 195 to 216 (LLNLVEQLGEADEELAGKYAEL) are leucine-zipper.

The protein belongs to the N-acylglucosamine 2-epimerase family. In terms of assembly, homodimer. Forms a heterodimer with renin and inhibits its activity.

The catalysed reaction is an N-acyl-D-glucosamine = an N-acyl-D-mannosamine. Its pathway is amino-sugar metabolism; N-acetylneuraminate degradation. Inhibited by N-ethylmaleimide, 5,5'-dithiobis-2-nitrobenzoate and iodoacetic acid. In terms of biological role, catalyzes the interconversion of N-acetylglucosamine to N-acetylmannosamine. Involved in the N-glycolylneuraminic acid (Neu5Gc) degradation pathway: although human is not able to catalyze formation of Neu5Gc due to the inactive CMAHP enzyme, Neu5Gc is present in food and must be degraded. This is N-acylglucosamine 2-epimerase (RENBP) from Homo sapiens (Human).